Reading from the N-terminus, the 314-residue chain is Probable 2-(5''-triphosphoribosyl)-3'-dephosphocoenzyme-A synthase (314 aa).

This sequence belongs to the CitG/MdcB family.

The catalysed reaction is 3'-dephospho-CoA + ATP = 2'-(5''-triphospho-alpha-D-ribosyl)-3'-dephospho-CoA + adenine. This is Probable 2-(5''-triphosphoribosyl)-3'-dephosphocoenzyme-A synthase from Photobacterium profundum (strain SS9).